Here is a 57-residue protein sequence, read N- to C-terminus: DNA-directed RNA polymerase subunit Rpo6 (57 aa).

It belongs to the archaeal Rpo6/eukaryotic RPB6 RNA polymerase subunit family. As to quaternary structure, part of the RNA polymerase complex.

It is found in the cytoplasm. Its subcellular location is the chromosome. It carries out the reaction RNA(n) + a ribonucleoside 5'-triphosphate = RNA(n+1) + diphosphate. In terms of biological role, DNA-dependent RNA polymerase (RNAP) catalyzes the transcription of DNA into RNA using the four ribonucleoside triphosphates as substrates. The protein is DNA-directed RNA polymerase subunit Rpo6 of Thermococcus kodakarensis (strain ATCC BAA-918 / JCM 12380 / KOD1) (Pyrococcus kodakaraensis (strain KOD1)).